The sequence spans 529 residues: Ribonuclease Y (529 aa).

Residues 4 to 24 (GLIYISLEVIVACLISALAMY) form a helical membrane-spanning segment. The region spanning 216–297 (FTNRIALPCS…NRIEEVYHRV (82 aa)) is the KH domain. The HD domain occupies 342–435 (ALQHSKEVAL…VCAADALSAG (94 aa)).

The protein belongs to the RNase Y family.

Its subcellular location is the cell membrane. Its function is as follows. Endoribonuclease that initiates mRNA decay. The protein is Ribonuclease Y of Helicobacter acinonychis (strain Sheeba).